Reading from the N-terminus, the 175-residue chain is Small ribosomal subunit protein uS4 (175 aa).

The region spanning 105-169 (RRLQTIVYRQ…SPLADSLHPA (65 aa)) is the S4 RNA-binding domain.

The protein belongs to the universal ribosomal protein uS4 family. As to quaternary structure, part of the 30S ribosomal subunit. Contacts protein S5. The interaction surface between S4 and S5 is involved in control of translational fidelity.

Functionally, one of the primary rRNA binding proteins, it binds directly to 16S rRNA where it nucleates assembly of the body of the 30S subunit. In terms of biological role, with S5 and S12 plays an important role in translational accuracy. The sequence is that of Small ribosomal subunit protein uS4 from Haloquadratum walsbyi (strain DSM 16790 / HBSQ001).